We begin with the raw amino-acid sequence, 379 residues long: Queuine tRNA-ribosyltransferase (379 aa).

D93 (proton acceptor) is an active-site residue. Residues 93-97 (DSGGF), D147, Q191, and G218 each bind substrate. Residues 249–255 (GVGKPED) are RNA binding. Catalysis depends on D268, which acts as the Nucleophile. The interval 273 to 277 (TRNAR) is RNA binding; important for wobble base 34 recognition. Residues C306, C308, C311, and H337 each contribute to the Zn(2+) site.

The protein belongs to the queuine tRNA-ribosyltransferase family. In terms of assembly, homodimer. Within each dimer, one monomer is responsible for RNA recognition and catalysis, while the other monomer binds to the replacement base PreQ1. Requires Zn(2+) as cofactor.

The catalysed reaction is 7-aminomethyl-7-carbaguanine + guanosine(34) in tRNA = 7-aminomethyl-7-carbaguanosine(34) in tRNA + guanine. The protein operates within tRNA modification; tRNA-queuosine biosynthesis. In terms of biological role, catalyzes the base-exchange of a guanine (G) residue with the queuine precursor 7-aminomethyl-7-deazaguanine (PreQ1) at position 34 (anticodon wobble position) in tRNAs with GU(N) anticodons (tRNA-Asp, -Asn, -His and -Tyr). Catalysis occurs through a double-displacement mechanism. The nucleophile active site attacks the C1' of nucleotide 34 to detach the guanine base from the RNA, forming a covalent enzyme-RNA intermediate. The proton acceptor active site deprotonates the incoming PreQ1, allowing a nucleophilic attack on the C1' of the ribose to form the product. After dissociation, two additional enzymatic reactions on the tRNA convert PreQ1 to queuine (Q), resulting in the hypermodified nucleoside queuosine (7-(((4,5-cis-dihydroxy-2-cyclopenten-1-yl)amino)methyl)-7-deazaguanosine). This chain is Queuine tRNA-ribosyltransferase, found in Actinobacillus succinogenes (strain ATCC 55618 / DSM 22257 / CCUG 43843 / 130Z).